Consider the following 104-residue polypeptide: L-rhamnose mutarotase (104 aa).

Y18 lines the substrate pocket. The active-site Proton donor is H22. Substrate-binding positions include Y41 and 76-77 (WW).

This sequence belongs to the rhamnose mutarotase family. In terms of assembly, homodimer.

The protein resides in the cytoplasm. The catalysed reaction is alpha-L-rhamnose = beta-L-rhamnose. It participates in carbohydrate metabolism; L-rhamnose metabolism. Involved in the anomeric conversion of L-rhamnose. In Jannaschia sp. (strain CCS1), this protein is L-rhamnose mutarotase.